A 240-amino-acid polypeptide reads, in one-letter code: Homeobox-leucine zipper protein HOX14 (240 aa).

A disordered region spans residues 26–64 (SGEVQGERPRARRRRRRGARCVGGGGGGGEVDGGDPKKR). Residues 35 to 44 (RARRRRRRGA) are compositionally biased toward basic residues. The span at 46–56 (CVGGGGGGGEV) shows a compositional bias: gly residues. The homeobox DNA-binding region spans 59–118 (GDPKKRRLSDEQVEMLELSFREERKLETGRKVHLASELGLDPKQVAVWFQNRRARHKSKL). A coiled-coil region spans residues 108-167 (QNRRARHKSKLLEEEFSKLKHAHDAAILHKCHLENEVLRLKERLVVAEEEVRRLRSAAGS).

Belongs to the HD-ZIP homeobox family. Class I subfamily. As to expression, expressed in roots, stems, leaf blades and panicles.

The protein resides in the nucleus. Probable transcription factor. The polypeptide is Homeobox-leucine zipper protein HOX14 (HOX14) (Oryza sativa subsp. japonica (Rice)).